Consider the following 202-residue polypeptide: Peptide deformylase (202 aa).

Positions 121 and 163 each coordinate Fe cation. Glu164 is a catalytic residue. Residue His167 coordinates Fe cation.

Belongs to the polypeptide deformylase family. It depends on Fe(2+) as a cofactor.

It carries out the reaction N-terminal N-formyl-L-methionyl-[peptide] + H2O = N-terminal L-methionyl-[peptide] + formate. In terms of biological role, removes the formyl group from the N-terminal Met of newly synthesized proteins. Requires at least a dipeptide for an efficient rate of reaction. N-terminal L-methionine is a prerequisite for activity but the enzyme has broad specificity at other positions. This is Peptide deformylase from Synechococcus sp. (strain CC9311).